The primary structure comprises 1377 residues: Zinc finger MYM-type protein 2 (1377 aa).

Glycyl lysine isopeptide (Lys-Gly) (interchain with G-Cter in SUMO2) cross-links involve residues K48, K88, K98, and K104. Polar residues-rich tracts occupy residues 85 to 115 (TSSK…SVSE) and 127 to 138 (TNQGQEKNSSNF). The tract at residues 85–177 (TSSKNEELQG…GMGNSGITTE (93 aa)) is disordered. Residues 139-152 (IERRPPETKNRTND) are compositionally biased toward basic and acidic residues. K147 is covalently cross-linked (Glycyl lysine isopeptide (Lys-Gly) (interchain with G-Cter in SUMO2)). A compositionally biased stretch (polar residues) spans 153 to 164 (VDFSTSSFSRSK). S159 is modified (phosphoserine). Residues K253 and K297 each participate in a glycyl lysine isopeptide (Lys-Gly) (interchain with G-Cter in SUMO2) cross-link. Residues 273–305 (NGESATHHNPDSWISQSASFPRNQKQPGVDSLS) form a disordered region. Over residues 284 to 298 (SWISQSASFPRNQKQ) the composition is skewed to polar residues. Position 305 is a phosphoserine (S305). Residues K312, K325, K348, and K366 each participate in a glycyl lysine isopeptide (Lys-Gly) (interchain with G-Cter in SUMO2) cross-link. Residues 327–363 (VKVTCANCKKPLQKGQTAYQRKGSAHLFCSTTCLSSF) form an MYM-type 1 zinc finger. The MYM-type 2 zinc finger occupies 369–409 (PKKLCVMCKKDITTMKGTIVAQVDSSESFQEFCSTSCLSLY). Residues K417, K441, K491, K503, K513, K529, and K532 each participate in a glycyl lysine isopeptide (Lys-Gly) (interchain with G-Cter in SUMO2) cross-link. 2 MYM-type zinc fingers span residues 421-456 (NKSR…FNRY) and 463-502 (IMNC…VSEY). The segment at 533 to 570 (LTTCTGCRTQCRFFDMTQCIGPNGYMEPYCSTACMNSH) adopts an MYM-type 5 zinc-finger fold. Residues K576, K603, K649, K658, K688, K700, and K709 each participate in a glycyl lysine isopeptide (Lys-Gly) (interchain with G-Cter in SUMO2) cross-link. The segment at 636 to 671 (QLKCNYCKNSFCSKPEILEWENKVHQFCSKTCSDDY) adopts an MYM-type 6 zinc-finger fold. 2 MYM-type zinc fingers span residues 723–758 (RCVT…CKKF) and 764–799 (KAAR…LLRF). Residues K764, K788, K812, and K829 each participate in a glycyl lysine isopeptide (Lys-Gly) (interchain with G-Cter in SUMO2) cross-link. 2 positions are modified to phosphoserine: S838 and S958. Disordered regions lie at residues 983–1002 (LLKN…PYEP) and 1028–1064 (VFGE…SDNS). Residues 1039 to 1050 (PRSKKKGAKRKA) show a composition bias toward basic residues. A Phosphoserine modification is found at S1064. Residue T1376 is modified to Phosphothreonine.

As to quaternary structure, may be a component of a BHC histone deacetylase complex that contains HDAC1, HDAC2, HMG20B/BRAF35, KDM1A, RCOR1/CoREST, PHF21A/BHC80, ZNF198, ZNF217, ZMYM3, GSE1 and GTF2I.

The protein resides in the nucleus. May function as a transcription factor. This chain is Zinc finger MYM-type protein 2 (ZMYM2), found in Pongo abelii (Sumatran orangutan).